We begin with the raw amino-acid sequence, 411 residues long: MTFIEEFIYKGYLNQCTDLARLSAITQEAKIAAYIGFDCTATSLHIGSLMQIMILRLLQKHGHTPIVIIGGGTSKIGDPAGKDVTRKALTQEDIKRNAEGIKKSLSKFIKFGKDQGDAIILDNAEWLDSLNYLDFLRDFGSYFSVNRMLTMDSVKLRLDRSHHLSFLELNYMLLQSYDFYYLSKNYNCILQLGGSDQWGNIVIGADLIRKISGKEVFGMTTPLLTTASGAKMGKTAAGAVWLNEDLLSPYDYYQYWRNCEDADVMRFAKLYSELDIVELNKFESLVSEDINAAKKQLAYELTKLCHGERLAKLALETAVKIFEQGDIDENLHTFILAPEILQSGISAYNLFYNANLARSKSEARKIIRGKGAKINDQLVEDENMTIDTNFLRNRKVIKLSVGKKRHILVKV.

Tyrosine 34 provides a ligand contact to L-tyrosine. Positions 39–48 match the 'HIGH' region motif; that stretch reads CTATSLHIGS. Positions 171 and 175 each coordinate L-tyrosine. A 'KMSKS' region motif is present at residues 231-235; that stretch reads KMGKT. Lysine 234 contributes to the ATP binding site. The region spanning 345–411 is the S4 RNA-binding domain; sequence ISAYNLFYNA…GKKRHILVKV (67 aa).

This sequence belongs to the class-I aminoacyl-tRNA synthetase family. TyrS type 1 subfamily. In terms of assembly, homodimer.

The protein localises to the cytoplasm. It carries out the reaction tRNA(Tyr) + L-tyrosine + ATP = L-tyrosyl-tRNA(Tyr) + AMP + diphosphate + H(+). Functionally, catalyzes the attachment of tyrosine to tRNA(Tyr) in a two-step reaction: tyrosine is first activated by ATP to form Tyr-AMP and then transferred to the acceptor end of tRNA(Tyr). The protein is Tyrosine--tRNA ligase of Rickettsia prowazekii (strain Madrid E).